Reading from the N-terminus, the 89-residue chain is Strongylocin 2 (89 aa).

An N-terminal signal peptide occupies residues 1 to 22 (MNIRTASFTFIVVMMILSQTMA). Positions 23 to 38 (DRFFNEPEEDDHLVES) are excised as a propeptide. The residue at position 39 (W39) is a 6'-bromotryptophan.

Post-translationally, contains 3 disulfide bonds.

Has antimicrobial activity against Gram-negative bacteria and Gram-positive bacteria with minimum inhibitory concentration (MIC) between 0.78 uM and 3.13 uM. This Echinus esculentus (Sea urchin) protein is Strongylocin 2.